The primary structure comprises 601 residues: MTTRTIDNIRNFSIVAHIDHGKSTLADRLIQTTGTVALRDMSEQMLDSMDIEKERGITIKAQTVRLEYRAEDGKDYILNLMDTPGHVDFAYEVSRSLAACEGSLLVVDASQGVEAQTLANVYQALDANHEIVPVLNKVDLPAAEPDRVKEQIEEVIGLDASEAVPISAKTGLNIEAVLEAIVKRLPAPKGDREAPLKALLVDSWYDVYLGVVVLVRIIDGVLKKGMTIRMMGADAAYGVDRIGVFRPKMADIGELGPGEVGFFTGSIKEVADTRVGDTITEDKRQTTQMLAGFKEVQAVVFCGLFPVDAADFESLRGAMGKLRLNDASFSYEMETSAALGFGFRCGFLGLLHLEIIQERLEREFNLDLISTAPSVVYRLLMRDGELKELHNPADMPDPMKIETVEEPWIRATILTPDEYLGGVLKLCQDRRGIQIDLNYVGKRAMVVYDLPLNEVVFDFYDRLKSISKGYASFDYHVSDYREGDLVKMSILVNAEPVDALSMLVHRTRAESRGRAMCEKLKDLIPRHLFQIPVQAAIGGKIIARETIRALSKDVTAKCYGGDISRKRKLLDKQKEGKKRMRQFGRVEIPQEAFIAALKMDD.

The tr-type G domain occupies 7–189; the sequence is DNIRNFSIVA…AIVKRLPAPK (183 aa). Residues 19–24 and 136–139 contribute to the GTP site; these read DHGKST and NKVD.

This sequence belongs to the TRAFAC class translation factor GTPase superfamily. Classic translation factor GTPase family. LepA subfamily.

It localises to the cell inner membrane. The enzyme catalyses GTP + H2O = GDP + phosphate + H(+). Functionally, required for accurate and efficient protein synthesis under certain stress conditions. May act as a fidelity factor of the translation reaction, by catalyzing a one-codon backward translocation of tRNAs on improperly translocated ribosomes. Back-translocation proceeds from a post-translocation (POST) complex to a pre-translocation (PRE) complex, thus giving elongation factor G a second chance to translocate the tRNAs correctly. Binds to ribosomes in a GTP-dependent manner. The protein is Elongation factor 4 of Methylorubrum extorquens (strain CM4 / NCIMB 13688) (Methylobacterium extorquens).